Consider the following 379-residue polypeptide: Nitric oxide reductase FlRd-NAD(+) reductase (379 aa).

It belongs to the FAD-dependent oxidoreductase family. Requires FAD as cofactor.

The protein resides in the cytoplasm. It catalyses the reaction 2 reduced [nitric oxide reductase rubredoxin domain] + NAD(+) + H(+) = 2 oxidized [nitric oxide reductase rubredoxin domain] + NADH. It participates in nitrogen metabolism; nitric oxide reduction. In terms of biological role, one of at least two accessory proteins for anaerobic nitric oxide (NO) reductase. Reduces the rubredoxin moiety of NO reductase. The protein is Nitric oxide reductase FlRd-NAD(+) reductase of Pectobacterium atrosepticum (strain SCRI 1043 / ATCC BAA-672) (Erwinia carotovora subsp. atroseptica).